The primary structure comprises 470 residues: Ribulose bisphosphate carboxylase large chain (470 aa).

Substrate is bound by residues asparagine 115 and threonine 165. Lysine 167 (proton acceptor) is an active-site residue. Residue lysine 169 coordinates substrate. Lysine 193, aspartate 195, and glutamate 196 together coordinate Mg(2+). Lysine 193 carries the post-translational modification N6-carboxylysine. Histidine 286 functions as the Proton acceptor in the catalytic mechanism. Substrate contacts are provided by arginine 287, histidine 319, and serine 371.

Belongs to the RuBisCO large chain family. Type I subfamily. As to quaternary structure, heterohexadecamer of 8 large chains and 8 small chains. Requires Mg(2+) as cofactor.

The protein resides in the carboxysome. The enzyme catalyses 2 (2R)-3-phosphoglycerate + 2 H(+) = D-ribulose 1,5-bisphosphate + CO2 + H2O. The catalysed reaction is D-ribulose 1,5-bisphosphate + O2 = 2-phosphoglycolate + (2R)-3-phosphoglycerate + 2 H(+). Its function is as follows. RuBisCO catalyzes two reactions: the carboxylation of D-ribulose 1,5-bisphosphate, the primary event in carbon dioxide fixation, as well as the oxidative fragmentation of the pentose substrate in the photorespiration process. Both reactions occur simultaneously and in competition at the same active site. The polypeptide is Ribulose bisphosphate carboxylase large chain (Prochlorococcus marinus (strain SARG / CCMP1375 / SS120)).